A 450-amino-acid polypeptide reads, in one-letter code: Chromosomal replication initiator protein DnaA (450 aa).

The segment at 1–76 (MNLNDILKEL…KKILKQPVNI (76 aa)) is domain I, interacts with DnaA modulators. The domain II stretch occupies residues 76–107 (ISFTYEQEYQKQLEKTESINKDHSDIISKKNK). Positions 108–327 (KVNENTFENF…GSVSRLNFWS (220 aa)) are domain III, AAA+ region. ATP contacts are provided by Gly151, Gly153, Lys154, and Thr155. The segment at 328–450 (QQNPEEKVIT…DILKNKILTK (123 aa)) is domain IV, binds dsDNA.

This sequence belongs to the DnaA family. In terms of assembly, oligomerizes as a right-handed, spiral filament on DNA at oriC.

Its subcellular location is the cytoplasm. It localises to the cell membrane. Its function is as follows. Plays an essential role in the initiation and regulation of chromosomal replication. ATP-DnaA binds to the origin of replication (oriC) to initiate formation of the DNA replication initiation complex once per cell cycle. Binds the DnaA box (a 9 base pair repeat at the origin) and separates the double-stranded (ds)DNA. Forms a right-handed helical filament on oriC DNA; dsDNA binds to the exterior of the filament while single-stranded (ss)DNA is stabiized in the filament's interior. The ATP-DnaA-oriC complex binds and stabilizes one strand of the AT-rich DNA unwinding element (DUE), permitting loading of DNA polymerase. After initiation quickly degrades to an ADP-DnaA complex that is not apt for DNA replication. Binds acidic phospholipids. The chain is Chromosomal replication initiator protein DnaA from Mycoplasma capricolum subsp. capricolum (strain California kid / ATCC 27343 / NCTC 10154).